The chain runs to 122 residues: Large ribosomal subunit protein bL12 (122 aa).

Belongs to the bacterial ribosomal protein bL12 family. As to quaternary structure, homodimer. Part of the ribosomal stalk of the 50S ribosomal subunit. Forms a multimeric L10(L12)X complex, where L10 forms an elongated spine to which 2 to 4 L12 dimers bind in a sequential fashion. Binds GTP-bound translation factors.

Functionally, forms part of the ribosomal stalk which helps the ribosome interact with GTP-bound translation factors. Is thus essential for accurate translation. The polypeptide is Large ribosomal subunit protein bL12 (Shewanella woodyi (strain ATCC 51908 / MS32)).